Consider the following 79-residue polypeptide: Translational regulator CsrA (79 aa).

This sequence belongs to the CsrA/RsmA family. Homodimer; the beta-strands of each monomer intercalate to form a hydrophobic core, while the alpha-helices form wings that extend away from the core.

The protein resides in the cytoplasm. Functionally, a translational regulator that binds mRNA to regulate translation initiation and/or mRNA stability. Usually binds in the 5'-UTR at or near the Shine-Dalgarno sequence preventing ribosome-binding, thus repressing translation. Its main target seems to be the major flagellin gene, while its function is anatagonized by FliW. This chain is Translational regulator CsrA, found in Leptospira biflexa serovar Patoc (strain Patoc 1 / Ames).